The following is a 157-amino-acid chain: D-aminoacyl-tRNA deacylase (157 aa).

Positions 137 to 138 match the Gly-cisPro motif, important for rejection of L-amino acids motif; sequence GP.

Belongs to the DTD family. Homodimer.

The protein resides in the cytoplasm. It carries out the reaction glycyl-tRNA(Ala) + H2O = tRNA(Ala) + glycine + H(+). The catalysed reaction is a D-aminoacyl-tRNA + H2O = a tRNA + a D-alpha-amino acid + H(+). Its function is as follows. An aminoacyl-tRNA editing enzyme that deacylates mischarged D-aminoacyl-tRNAs. Also deacylates mischarged glycyl-tRNA(Ala), protecting cells against glycine mischarging by AlaRS. Acts via tRNA-based rather than protein-based catalysis; rejects L-amino acids rather than detecting D-amino acids in the active site. By recycling D-aminoacyl-tRNA to D-amino acids and free tRNA molecules, this enzyme counteracts the toxicity associated with the formation of D-aminoacyl-tRNA entities in vivo and helps enforce protein L-homochirality. The sequence is that of D-aminoacyl-tRNA deacylase from Cyanothece sp. (strain PCC 7425 / ATCC 29141).